The following is a 742-amino-acid chain: Conserved oligomeric Golgi complex subunit 6 (742 aa).

The tract at residues 692-742 (VGEDWELEEDTEEKSMKQKEQQDEDTEDQGEKGIMQEEHKAQDAGNTEDKA) is disordered. Over residues 694–703 (EDWELEEDTE) the composition is skewed to acidic residues. A compositionally biased stretch (basic and acidic residues) spans 720–742 (QGEKGIMQEEHKAQDAGNTEDKA).

It belongs to the COG6 family.

It is found in the golgi apparatus membrane. Its function is as follows. Acts as a component of the peripheral membrane COG complex that is involved in intra-Golgi protein trafficking. COG is located at the cis-Golgi, and regulates tethering of retrograde intra-Golgi vesicles and possibly a number of other membrane trafficking events. This is Conserved oligomeric Golgi complex subunit 6 (COG6) from Cryptococcus neoformans var. neoformans serotype D (strain JEC21 / ATCC MYA-565) (Filobasidiella neoformans).